A 276-amino-acid chain; its full sequence is Vitamin B12-binding protein (276 aa).

Residues 1-20 (MLVIRLIACTFLFITPSLLA) form the signal peptide. One can recognise a Fe/B12 periplasmic-binding domain in the interval 27–274 (RIISLAPHAT…QVCTYLKIAQ (248 aa)). Y54 contributes to the cyanocob(III)alamin binding site. The cysteines at positions 187 and 267 are disulfide-linked.

This sequence belongs to the BtuF family. In terms of assembly, the complex is composed of two ATP-binding proteins (BtuD), two transmembrane proteins (BtuC) and a solute-binding protein (BtuF).

Its subcellular location is the periplasm. Part of the ABC transporter complex BtuCDF involved in vitamin B12 import. Binds vitamin B12 and delivers it to the periplasmic surface of BtuC. The chain is Vitamin B12-binding protein from Vibrio cholerae serotype O1 (strain ATCC 39541 / Classical Ogawa 395 / O395).